The chain runs to 428 residues: Phosphomethylpyrimidine synthase 2 (428 aa).

Residues Met-94, Tyr-123, His-162, 184–186, 225–228, and Glu-264 contribute to the substrate site; these read SRG and NGMR. Position 268 (His-268) interacts with Zn(2+). Tyr-291 is a binding site for substrate. A Zn(2+)-binding site is contributed by His-332. [4Fe-4S] cluster-binding residues include Cys-408, Cys-411, and Cys-415.

Belongs to the ThiC family. [4Fe-4S] cluster serves as cofactor.

It catalyses the reaction 5-amino-1-(5-phospho-beta-D-ribosyl)imidazole + S-adenosyl-L-methionine = 4-amino-2-methyl-5-(phosphooxymethyl)pyrimidine + CO + 5'-deoxyadenosine + formate + L-methionine + 3 H(+). Its pathway is cofactor biosynthesis; thiamine diphosphate biosynthesis. In terms of biological role, catalyzes the synthesis of the hydroxymethylpyrimidine phosphate (HMP-P) moiety of thiamine from aminoimidazole ribotide (AIR) in a radical S-adenosyl-L-methionine (SAM)-dependent reaction. The polypeptide is Phosphomethylpyrimidine synthase 2 (Methanosarcina mazei (strain ATCC BAA-159 / DSM 3647 / Goe1 / Go1 / JCM 11833 / OCM 88) (Methanosarcina frisia)).